Consider the following 151-residue polypeptide: Transcriptional repressor NrdR (151 aa).

A disordered region spans residues 1–24; that stretch reads MRCPKCQHNGTRVLDSRPSDESRS. Residues 3 to 34 fold into a zinc finger; the sequence is CPKCQHNGTRVLDSRPSDESRSIKRRRECEKC. Residues 14 to 24 are compositionally biased toward basic and acidic residues; the sequence is LDSRPSDESRS. In terms of domain architecture, ATP-cone spans 49 to 139; the sequence is LLIIKKDGMR…VYRQFKDINV (91 aa).

The protein belongs to the NrdR family. Zn(2+) is required as a cofactor.

Functionally, negatively regulates transcription of bacterial ribonucleotide reductase nrd genes and operons by binding to NrdR-boxes. In Shouchella clausii (strain KSM-K16) (Alkalihalobacillus clausii), this protein is Transcriptional repressor NrdR.